Reading from the N-terminus, the 310-residue chain is Homeobox protein knotted-1-like 2 (310 aa).

Positions 178-208 are disordered; the sequence is SDDGAVSSDEELREDDDIAADDSQQRSNDRD. Residues 185–197 are compositionally biased toward acidic residues; the sequence is SDEELREDDDIAA. In terms of domain architecture, ELK spans 208 to 228; the sequence is DLKDQLLRKFGSHISSLKLEF. Residues 229 to 292 constitute a DNA-binding region (homeobox; TALE-type); that stretch reads SKKKKKGKLP…NQRKRHWKPS (64 aa).

This sequence belongs to the TALE/KNOX homeobox family. As to quaternary structure, may form heterodimeric complex with the TALE/BELL protein BEL1, BLH1 and BLH2. Interacts with OFP12 and OFP14. Interacts with BZIP30. In terms of tissue distribution, expressed predominantly in shoot apices of seedlings, in the receptacle and developing pistil of flowers and in axillary buds of inflorescence stems.

The protein resides in the nucleus. Functionally, may play a role in meristem function, and may be involved in maintaining cells in an undifferentiated, meristematic state. Probably binds to the DNA sequence 5'-TGAC-3'. The sequence is that of Homeobox protein knotted-1-like 2 (KNAT2) from Arabidopsis thaliana (Mouse-ear cress).